We begin with the raw amino-acid sequence, 96 residues long: Small ribosomal subunit protein bS18 (96 aa).

Belongs to the bacterial ribosomal protein bS18 family. In terms of assembly, part of the 30S ribosomal subunit. Forms a tight heterodimer with protein bS6.

Binds as a heterodimer with protein bS6 to the central domain of the 16S rRNA, where it helps stabilize the platform of the 30S subunit. The sequence is that of Small ribosomal subunit protein bS18 from Borreliella burgdorferi (strain ATCC 35210 / DSM 4680 / CIP 102532 / B31) (Borrelia burgdorferi).